Consider the following 622-residue polypeptide: Transcription factor SKN7 (622 aa).

Residues 1-12 (MSFSTINSNVNK) show a composition bias toward polar residues. A disordered region spans residues 1–29 (MSFSTINSNVNKTTGDSNNNTTENSSTAD). Over residues 13 to 27 (TTGDSNNNTTENSST) the composition is skewed to low complexity. Positions 84-190 (ANEFVRKLFR…GLDNIKRKIP (107 aa)) are DNA-binding domain. A hydrophobic repeat HR-A/B region spans residues 212 to 303 (TNPNNPSGSL…NNFNTLCSTL (92 aa)). Positions 240–260 (FGNLRRRVDKLQKELDMSKME) form a coiled coil. Positions 378-492 (HVLLVEDDAV…DLHSILIRYL (115 aa)) constitute a Response regulatory domain. At D427 the chain carries 4-aspartylphosphate. Disordered regions lie at residues 501 to 579 (QQLP…QHHN) and 599 to 622 (TVPH…NQLS). The segment covering 512-527 (THSNTNTANSNPNTIN) has biased composition (low complexity). Polar residues predominate over residues 537–554 (DNPSTTTPVTPGASISSA). Low complexity predominate over residues 555 to 578 (QHVQQGQQEQQHQIFHAQQQQQHH). The span at 600–622 (VPHSSMGSTPQLPQSTLQENQLS) shows a compositional bias: polar residues.

It belongs to the SKN7 family. As to quaternary structure, homotrimer. In terms of processing, the phosphorelay mechanism involves the sequential transfer of a phosphate group from 'His-576' (H1) to 'Asp-1144' (D1) of SLN1, then to 'His-64' (H2) of YPD1 and finally to Asp-427 (D2) of SKN7.

The protein localises to the nucleus. Its function is as follows. Transcription factor that is part of a SLN1-YPD1-SKN7 two-component regulatory system, which controls gene expression in response to changes in the osmolarity of the extracellular environment. Under low osmotic conditions, phosphorylated and activated by the phosphorelay intermediate protein YPD1. Also activated in response to oxidative stress, independent on the two-component regulatory system. Regulates heat shock genes in response to oxidative stress and genes involved in cell wall integrity in response to osmotic changes. The sequence is that of Transcription factor SKN7 (SKN7) from Saccharomyces cerevisiae (strain ATCC 204508 / S288c) (Baker's yeast).